Here is a 64-residue protein sequence, read N- to C-terminus: Small, acid-soluble spore protein H (64 aa).

This sequence belongs to the SspH family.

The protein resides in the spore core. In Acetivibrio thermocellus (strain ATCC 27405 / DSM 1237 / JCM 9322 / NBRC 103400 / NCIMB 10682 / NRRL B-4536 / VPI 7372) (Clostridium thermocellum), this protein is Small, acid-soluble spore protein H.